Consider the following 179-residue polypeptide: Large ribosomal subunit protein uL5 (179 aa).

The protein belongs to the universal ribosomal protein uL5 family. In terms of assembly, part of the 50S ribosomal subunit; part of the 5S rRNA/L5/L18/L25 subcomplex. Contacts the 5S rRNA and the P site tRNA. Forms a bridge to the 30S subunit in the 70S ribosome.

In terms of biological role, this is one of the proteins that bind and probably mediate the attachment of the 5S RNA into the large ribosomal subunit, where it forms part of the central protuberance. In the 70S ribosome it contacts protein S13 of the 30S subunit (bridge B1b), connecting the 2 subunits; this bridge is implicated in subunit movement. Contacts the P site tRNA; the 5S rRNA and some of its associated proteins might help stabilize positioning of ribosome-bound tRNAs. The protein is Large ribosomal subunit protein uL5 of Solidesulfovibrio magneticus (strain ATCC 700980 / DSM 13731 / RS-1) (Desulfovibrio magneticus).